Here is a 91-residue protein sequence, read N- to C-terminus: Acylphosphatase (91 aa).

Residues 3–89 enclose the Acylphosphatase-like domain; that stretch reads TLLVRISGKV…PDQPGFSQKP (87 aa). Catalysis depends on residues R18 and N36.

The protein belongs to the acylphosphatase family.

The catalysed reaction is an acyl phosphate + H2O = a carboxylate + phosphate + H(+). The polypeptide is Acylphosphatase (acyP) (Rhodospirillum rubrum (strain ATCC 11170 / ATH 1.1.1 / DSM 467 / LMG 4362 / NCIMB 8255 / S1)).